Consider the following 68-residue polypeptide: Antimicrobial peptide Eval655 (68 aa).

Residues 1 to 23 (MKTQFVVLLVALVLLQMFAQSEA) form the signal peptide. Leu36 bears the Leucine amide mark. The propeptide occupies 37–68 (GKRGLKNLDDFDDIFDDDLSSADLEFLKQLMR).

Belongs to the non-disulfide-bridged peptide (NDBP) superfamily. Short antimicrobial peptide (group 4) family. As to expression, expressed by the venom gland.

It localises to the secreted. Functionally, probable antimicrobial peptide. Shows low inhibitory activity against herpes simplex virus type 1 (HSV-1). The chain is Antimicrobial peptide Eval655 from Euscorpiops validus (Scorpion).